The chain runs to 62 residues: DGYIKGNKGCKVSCVINNVFCNSMCKSSGGSYGYCWSWGLACWCEGLPAAKKWLYAATNTCG.

The LCN-type CS-alpha/beta domain maps to D1 to G62. Disulfide bonds link C10–C61, C14–C35, C21–C42, and C25–C44.

It belongs to the long (4 C-C) scorpion toxin superfamily. Sodium channel inhibitor family. Beta subfamily. As to expression, expressed by the venom gland.

The protein resides in the secreted. Depressant insect beta-toxins cause a transient contraction paralysis followed by a slow flaccid paralysis. They bind voltage-independently at site-4 of sodium channels (Nav) and shift the voltage of activation toward more negative potentials thereby affecting sodium channel activation and promoting spontaneous and repetitive firing. This toxin is active only on insects. The polypeptide is Insect toxin BsIT4 (Hottentotta tamulus sindicus (Scorpion)).